A 196-amino-acid polypeptide reads, in one-letter code: Putative acetyltransferase YJL218W (196 aa).

Residue Asn84 coordinates acetyl-CoA. The Proton donor/acceptor role is filled by His114. Acetyl-CoA contacts are provided by residues Gly141, Ala159, 164–165 (IR), Lys179, and Arg182.

It belongs to the transferase hexapeptide repeat family. Homodimer.

This Saccharomyces cerevisiae (strain ATCC 204508 / S288c) (Baker's yeast) protein is Putative acetyltransferase YJL218W.